A 167-amino-acid chain; its full sequence is Transcriptional regulator MraZ (167 aa).

2 consecutive SpoVT-AbrB domains span residues 8-51 (ESHH…YGDH) and 92-135 (SLPT…KPET).

The protein belongs to the MraZ family. Forms oligomers.

Its subcellular location is the cytoplasm. The protein resides in the nucleoid. The sequence is that of Transcriptional regulator MraZ from Ruegeria sp. (strain TM1040) (Silicibacter sp.).